We begin with the raw amino-acid sequence, 242 residues long: Neuromodulin (242 aa).

The tract at residues 1 to 242 is disordered; sequence MLCCMRRTKQ…EEREADQEHA (242 aa). 2 S-palmitoyl cysteine lipidation sites follow: C3 and C4. Residues 9 to 32 are compositionally biased toward basic and acidic residues; that stretch reads KQVEKNDEDQKIEQDGIKPEDKAH. One can recognise an IQ domain in the interval 31–60; sequence AHKAATKIQASFRGHITRKKLKGEKKGDAP. A Phosphoserine; by PHK and PKC modification is found at S41. Over residues 66 to 84 the composition is skewed to basic and acidic residues; the sequence is ANEKDEAAVAEGTEKKEGE. A compositionally biased stretch (low complexity) spans 85-97; it reads GSTPAEAAPGAGP. A Phosphoserine modification is found at S86. The segment covering 98–118 has biased composition (basic and acidic residues); the sequence is KPEEKTGKAGETPSEEKKGEG. Low complexity predominate over residues 119-134; that stretch reads APDAATEQAAPQAPAP. Residues 143–158 show a composition bias toward polar residues; that stretch reads ETESATKASTDNSPSS. A phosphoserine mark is found at S155, S157, and S158. The span at 159-171 shows a compositional bias: basic and acidic residues; the sequence is KAEDAPAKEEPKQ. Residues 172–204 are compositionally biased toward low complexity; the sequence is ADVPAAVTAAAATAPAAEDAAAMATAQPPTETA. Residues S206 and S207 each carry the phosphoserine; by CK2 modification. The segment covering 209–242 has biased composition (basic and acidic residues); the sequence is AEEKIEAVDETKPKDSARQDEGKGEEREADQEHA.

Belongs to the neuromodulin family. Identified in a complex containing FGFR4, NCAM1, CDH2, PLCG1, FRS2, SRC, SHC1, GAP43 and CTTN. Interacts (via IQ domain) with calmodulin. Binds calmodulin with a greater affinity in the absence of Ca(2+) than in its presence. In terms of processing, phosphorylated. Phosphorylation of this protein by a protein kinase C is specifically correlated with certain forms of synaptic plasticity. Post-translationally, palmitoylated by ZDHHC3. Palmitoylation is regulated by ARF6 and is essential for plasma membrane association and axonal and dendritic filopodia induction. Deacylated by LYPLA2.

Its subcellular location is the cell membrane. It is found in the cell projection. The protein localises to the growth cone membrane. It localises to the synapse. The protein resides in the filopodium membrane. Its subcellular location is the perikaryon. It is found in the dendrite. The protein localises to the axon. It localises to the cytoplasm. Its function is as follows. This protein is associated with nerve growth. It is a major component of the motile 'growth cones' that form the tips of elongating axons. Plays a role in axonal and dendritic filopodia induction. In Bos taurus (Bovine), this protein is Neuromodulin (GAP43).